We begin with the raw amino-acid sequence, 462 residues long: Elongation factor 1-alpha 1 (462 aa).

N,N,N-trimethylglycine is present on G2. A tr-type G domain is found at 5-242 (KTHINIVVIG…DCILPPTRPT (238 aa)). The interval 14 to 21 (GHVDSGKS) is G1. 14–21 (GHVDSGKS) is a binding site for GTP. K36 is modified (N6,N6,N6-trimethyllysine; alternate). The residue at position 36 (K36) is an N6,N6-dimethyllysine; alternate. K36 carries the post-translational modification N6-methyllysine; alternate. N6,N6-dimethyllysine is present on K55. The interval 70–74 (GITID) is G2. An N6,N6,N6-trimethyllysine; by EEF1AKMT1 modification is found at K79. The G3 stretch occupies residues 91–94 (DAPG). 153–156 (NKMD) is a binding site for GTP. Residues 153–156 (NKMD) are G4. K165 bears the N6,N6,N6-trimethyllysine; alternate; by EEF1AKMT3 mark. At K165 the chain carries N6,N6-dimethyllysine; alternate; by EEF1AKMT3. K165 carries the N6-acetyllysine; alternate modification. An N6-methyllysine; alternate; by EEF1AKMT3 modification is found at K165. K172 is modified (N6-acetyllysine). 194 to 196 (SGW) provides a ligand contact to GTP. Positions 194 to 196 (SGW) are G5. At K273 the chain carries N6-acetyllysine. S300 carries the post-translational modification Phosphoserine; by TGFBR1. Position 301 is a 5-glutamyl glycerylphosphorylethanolamine (E301). An N6,N6,N6-trimethyllysine; by EEF1AKMT2 modification is found at K318. 5-glutamyl glycerylphosphorylethanolamine is present on E374. K385 participates in a covalent cross-link: Glycyl lysine isopeptide (Lys-Gly) (interchain with G-Cter in ubiquitin). K392 bears the N6-acetyllysine; alternate mark. Position 392 is an N6-succinyllysine; alternate (K392). At T432 the chain carries Phosphothreonine; by PASK. At K439 the chain carries N6-acetyllysine.

Belongs to the TRAFAC class translation factor GTPase superfamily. Classic translation factor GTPase family. EF-Tu/EF-1A subfamily. As to quaternary structure, found in a nuclear export complex with XPO5, EEF1A1, Ran and aminoacylated tRNA. Interacts with PARP1 and TXK. Interacts with KARS1. May interact with ERGIC2. Interacts with IFIT1 (via TPR repeats 4-7). Interacts with DLC1, facilitating distribution to the membrane periphery and ruffles upon growth factor stimulation. Interacts with ZPR1; the interaction occurs in a epidermal growth factor (EGF)-dependent manner. Interacts with PPP1R16B. Interacts with SPHK1 and SPHK2; both interactions increase SPHK1 and SPHK2 kinase activity. Interacts with guanyl-nucleotide exchange factor EEF1B2. Interacts (via middle-region) with HTATIP2 (via N-terminus); the interaction is direct and competes with EEF1A1 binding to guanyl-nucleotide exchange factor EEF1B2, thereby inhibiting GDP for GTP exchange and reactivation of EEF1A1. Interacts with tRNA. ISGylated. In terms of processing, phosphorylated by TXK. Phosphorylation by PASK increases translation efficiency. Phosphorylated by ROCK2. Phosphorylation by TGFBR1 inhibits translation elongation. Post-translationally, trimethylated at Lys-79 by EEF1AKMT1. Methylated at Lys-165 by EEF1AKMT3, methylation by EEF1AKMT3 is dynamic as well as inducible by stress conditions, such as ER-stress, and plays a regulatory role on mRNA translation. Trimethylated at Lys-318 by EEF1AKMT2. Mono-, di-, and trimethylated at Lys-36 by EEF1AKMT4; trimethylated form is predominant. Methylation by EEF1AKMT4 contributes to the fine-tuning of translation rates for a subset of tRNAs. Trimethylated at Gly-2 by METTL13. Mono- and dimethylated at Lys-55 by METTL13; dimethylated form is predominant. Ubiquitinated at Lys-385 by RNF14 in response to ribosome collisions (ribosome stalling), leading to its degradation by the proteasome and rescue of stalled ribosomes.

Its subcellular location is the cytoplasm. The protein localises to the nucleus. It is found in the nucleolus. It localises to the cell membrane. It catalyses the reaction GTP + H2O = GDP + phosphate + H(+). Its function is as follows. Translation elongation factor that catalyzes the GTP-dependent binding of aminoacyl-tRNA (aa-tRNA) to the A-site of ribosomes during the elongation phase of protein synthesis. Base pairing between the mRNA codon and the aa-tRNA anticodon promotes GTP hydrolysis, releasing the aa-tRNA from EEF1A1 and allowing its accommodation into the ribosome. The growing protein chain is subsequently transferred from the P-site peptidyl tRNA to the A-site aa-tRNA, extending it by one amino acid through ribosome-catalyzed peptide bond formation. Also plays a role in the positive regulation of IFNG transcription in T-helper 1 cells as part of an IFNG promoter-binding complex with TXK and PARP1. Also plays a role in cytoskeleton organization by promoting actin bundling. The polypeptide is Elongation factor 1-alpha 1 (EEF1A1) (Cricetulus griseus (Chinese hamster)).